The sequence spans 280 residues: 3-deoxy-manno-octulosonate cytidylyltransferase (280 aa).

Belongs to the KdsB family.

It is found in the cytoplasm. It catalyses the reaction 3-deoxy-alpha-D-manno-oct-2-ulosonate + CTP = CMP-3-deoxy-beta-D-manno-octulosonate + diphosphate. It participates in nucleotide-sugar biosynthesis; CMP-3-deoxy-D-manno-octulosonate biosynthesis; CMP-3-deoxy-D-manno-octulosonate from 3-deoxy-D-manno-octulosonate and CTP: step 1/1. The protein operates within bacterial outer membrane biogenesis; lipopolysaccharide biosynthesis. Functionally, activates KDO (a required 8-carbon sugar) for incorporation into bacterial lipopolysaccharide in Gram-negative bacteria. In Colwellia psychrerythraea (strain 34H / ATCC BAA-681) (Vibrio psychroerythus), this protein is 3-deoxy-manno-octulosonate cytidylyltransferase.